The chain runs to 620 residues: Chaperone protein HtpG (620 aa).

An a; substrate-binding region spans residues Met1 to Arg339. Positions Glu340–Ala546 are b. The tract at residues Met547–Leu620 is c.

The protein belongs to the heat shock protein 90 family. As to quaternary structure, homodimer.

It is found in the cytoplasm. Molecular chaperone. Has ATPase activity. This is Chaperone protein HtpG from Sulfurovum sp. (strain NBC37-1).